The primary structure comprises 442 residues: Mannosylglycerate hydrolase (442 aa).

Substrate contacts are provided by residues Tyr-38, 42-45 (WSWD), Tyr-90, Gln-116, and Gly-176. The active-site Proton donor is the Asp-178. Residues Arg-213 and 369–370 (YW) each bind substrate. Glu-413 acts as the Proton acceptor in catalysis.

The protein belongs to the glycosyl hydrolase 63 family. As to quaternary structure, homodimer in solution.

It catalyses the reaction (2R)-2-O-(alpha-D-mannosyl)-glycerate + H2O = D-mannose + (R)-glycerate. The catalysed reaction is (2R)-2-O-(alpha-D-glucopyranosyl)-glycerate + H2O = (R)-glycerate + D-glucose. Its activity is regulated as follows. Activity is not stimulated by divalent cations and not affected in the presence of EDTA. Its function is as follows. Hydrolase that catalyzes the hydrolysis of mannosylglycerate (MG), a solute produced in response to osmotic stress in thermophiles, into mannose and glycerate. Can also hydrolyze glucosylglycerate (GG) to glucose and glycerate, with similar catalytic efficiency. Is highly specific for MG and GG, and cannot use mannosylglyceramide (MGA), glucosylglycerol, mannosylglucosylglycerate (MGG), glucosylglucosylglycerate (GGG) or trehalose as substrates. The polypeptide is Mannosylglycerate hydrolase (Rubrobacter radiotolerans (Arthrobacter radiotolerans)).